Reading from the N-terminus, the 438-residue chain is Xylose isomerase (438 aa).

Mg(2+)-binding residues include Asp-306 and Asp-308.

It belongs to the xylose isomerase family. Homotetramer. Mg(2+) serves as cofactor.

The protein localises to the cytoplasm. It catalyses the reaction alpha-D-xylose = alpha-D-xylulofuranose. The chain is Xylose isomerase from Caldicellulosiruptor bescii (strain ATCC BAA-1888 / DSM 6725 / KCTC 15123 / Z-1320) (Anaerocellum thermophilum).